Here is a 28-residue protein sequence, read N- to C-terminus: Cycloviolin-B (28 aa).

Positions 1-28 (GTACGESCYVLPCFTVGCTCTSSQCFKN) form a cross-link, cyclopeptide (Gly-Asn). Disulfide bonds link C4-C18, C8-C20, and C13-C25.

In terms of processing, this is a cyclic peptide.

In terms of biological role, probably participates in a plant defense mechanism. Has anti-HIV activity. In Leonia cymosa (Sacha uba), this protein is Cycloviolin-B.